The following is a 763-amino-acid chain: Phosphoglycerol transferase I (763 aa).

The next 4 helical transmembrane spans lie at 4–19, 26–48, 76–98, and 110–132; these read LLSV…IYAW, WWFA…LYAS, YILP…GWVL, and YSLL…RQIT.

Belongs to the OpgB family.

Its subcellular location is the cell inner membrane. It carries out the reaction a phosphatidylglycerol + a membrane-derived-oligosaccharide D-glucose = a 1,2-diacyl-sn-glycerol + a membrane-derived-oligosaccharide 6-(glycerophospho)-D-glucose.. Its pathway is glycan metabolism; osmoregulated periplasmic glucan (OPG) biosynthesis. In terms of biological role, transfers a phosphoglycerol residue from phosphatidylglycerol to the membrane-bound nascent glucan backbones. This chain is Phosphoglycerol transferase I, found in Salmonella typhi.